Consider the following 365-residue polypeptide: Succinyl-diaminopimelate desuccinylase (365 aa).

Residue H65 coordinates Zn(2+). Residue D67 is part of the active site. A Zn(2+)-binding site is contributed by D96. The active-site Proton acceptor is E126. Zn(2+)-binding residues include E127, E155, and H340.

Belongs to the peptidase M20A family. DapE subfamily. As to quaternary structure, homodimer. Zn(2+) is required as a cofactor. It depends on Co(2+) as a cofactor.

The enzyme catalyses N-succinyl-(2S,6S)-2,6-diaminopimelate + H2O = (2S,6S)-2,6-diaminopimelate + succinate. It participates in amino-acid biosynthesis; L-lysine biosynthesis via DAP pathway; LL-2,6-diaminopimelate from (S)-tetrahydrodipicolinate (succinylase route): step 3/3. Its function is as follows. Catalyzes the hydrolysis of N-succinyl-L,L-diaminopimelic acid (SDAP), forming succinate and LL-2,6-diaminopimelate (DAP), an intermediate involved in the bacterial biosynthesis of lysine and meso-diaminopimelic acid, an essential component of bacterial cell walls. In Campylobacter jejuni subsp. jejuni serotype O:2 (strain ATCC 700819 / NCTC 11168), this protein is Succinyl-diaminopimelate desuccinylase.